The following is a 100-amino-acid chain: NADH-quinone oxidoreductase subunit K 2 (100 aa).

3 helical membrane passes run 4-24 (LWWHISLGVALFVIGAAGVLL), 28-48 (ILVVLMSLELLLNSVNINFIA), and 60-80 (IFAIFVIAITAAEVAVALGIL).

It belongs to the complex I subunit 4L family. As to quaternary structure, NDH-1 is composed of 14 different subunits. Subunits NuoA, H, J, K, L, M, N constitute the membrane sector of the complex.

It is found in the cell inner membrane. It carries out the reaction a quinone + NADH + 5 H(+)(in) = a quinol + NAD(+) + 4 H(+)(out). In terms of biological role, NDH-1 shuttles electrons from NADH, via FMN and iron-sulfur (Fe-S) centers, to quinones in the respiratory chain. The immediate electron acceptor for the enzyme in this species is believed to be ubiquinone. Couples the redox reaction to proton translocation (for every two electrons transferred, four hydrogen ions are translocated across the cytoplasmic membrane), and thus conserves the redox energy in a proton gradient. This chain is NADH-quinone oxidoreductase subunit K 2, found in Sinorhizobium fredii (strain NBRC 101917 / NGR234).